The following is a 296-amino-acid chain: Arginase (296 aa).

Mn(2+) is bound by residues His97, Asp120, His122, and Asp124. Substrate is bound by residues 122 to 126 (HGDLN), 133 to 135 (SGN), and Asp176. The Mn(2+) site is built by Asp223 and Asp225. 2 residues coordinate substrate: Thr237 and Glu268.

The protein belongs to the arginase family. Mn(2+) serves as cofactor.

It carries out the reaction L-arginine + H2O = urea + L-ornithine. The protein operates within nitrogen metabolism; urea cycle; L-ornithine and urea from L-arginine: step 1/1. Functionally, involved in the catabolism of arginine. In Bacillus subtilis (strain 168), this protein is Arginase.